The chain runs to 233 residues: MARKVVVVDDEKPIADILEFNLKKEGYDVYCAYDGNDAVDLIYEEEPDIVLLDIMLPGRDGMEVCREVRKKFEMPIIMLTAKDSEIDKVLGLELGADDYVTKPFSTRELIARVKANLRRHYSQPAQEVSGTTNEITIKDIVIYPDAYSIKKRGEDIELTHREFELFHYLSKHMGQVMTREHLLQTVWGYDYFGDVRTVDVTIRRLREKIEDDPSHPEYIVTRRGVGYFLQQHD.

The 114-residue stretch at 4 to 117 (KVVVVDDEKP…ELIARVKANL (114 aa)) folds into the Response regulatory domain. Asp53 bears the 4-aspartylphosphate mark. A DNA-binding region (ompR/PhoB-type) is located at residues 132-231 (TNEITIKDIV…RRGVGYFLQQ (100 aa)).

Post-translationally, phosphorylated by WalK.

It is found in the cytoplasm. Member of the two-component regulatory system WalK/WalR. The protein is Transcriptional regulatory protein WalR (walR) of Staphylococcus haemolyticus (strain JCSC1435).